The following is a 213-amino-acid chain: Probable nicotinate-nucleotide adenylyltransferase (213 aa).

The protein belongs to the NadD family.

It carries out the reaction nicotinate beta-D-ribonucleotide + ATP + H(+) = deamido-NAD(+) + diphosphate. The protein operates within cofactor biosynthesis; NAD(+) biosynthesis; deamido-NAD(+) from nicotinate D-ribonucleotide: step 1/1. Catalyzes the reversible adenylation of nicotinate mononucleotide (NaMN) to nicotinic acid adenine dinucleotide (NaAD). This chain is Probable nicotinate-nucleotide adenylyltransferase, found in Escherichia coli O45:K1 (strain S88 / ExPEC).